Reading from the N-terminus, the 322-residue chain is Acetylglutamate kinase (322 aa).

Substrate contacts are provided by residues 85–86 (GG), arginine 107, and asparagine 211.

It belongs to the acetylglutamate kinase family. ArgB subfamily.

The protein localises to the cytoplasm. The catalysed reaction is N-acetyl-L-glutamate + ATP = N-acetyl-L-glutamyl 5-phosphate + ADP. The protein operates within amino-acid biosynthesis; L-arginine biosynthesis; N(2)-acetyl-L-ornithine from L-glutamate: step 2/4. Functionally, catalyzes the ATP-dependent phosphorylation of N-acetyl-L-glutamate. The chain is Acetylglutamate kinase from Methanosarcina barkeri (strain Fusaro / DSM 804).